The sequence spans 315 residues: MKVNVDMNSGFCFGVQFAIDRVEDEMKASGPLYSLGDIVHNAVEVERLEKLGLKTITIEEFKTLKNTRVFIRAHGEPPSTYKLALENNIELIDATCPVVMKLQQRIKEFYDRGYQVLIYGREGHPEVIGLCGQCNNEAIVLKHADLSDRGETEKIDFSRKTVLFSQTTKDTTGFYELKANLENVFREHHAAQNFDSAATESIVPDFQAKDTICRQVSNRDQKLAAFSKENECVIFVAGRKSSNGKVLFEVCKDANSNTHFIENQSELERAWFLRPDDSLVESVGVCGATSTPMWVMQQVAEHIRATFAAERFVQS.

[4Fe-4S] cluster is bound at residue cysteine 12. Positions 40 and 74 each coordinate (2E)-4-hydroxy-3-methylbut-2-enyl diphosphate. Residues histidine 40 and histidine 74 each contribute to the dimethylallyl diphosphate site. The isopentenyl diphosphate site is built by histidine 40 and histidine 74. Residue cysteine 96 participates in [4Fe-4S] cluster binding. Histidine 124 is a binding site for (2E)-4-hydroxy-3-methylbut-2-enyl diphosphate. Histidine 124 contacts dimethylallyl diphosphate. An isopentenyl diphosphate-binding site is contributed by histidine 124. Glutamate 126 functions as the Proton donor in the catalytic mechanism. Residue threonine 167 participates in (2E)-4-hydroxy-3-methylbut-2-enyl diphosphate binding. Cysteine 213 provides a ligand contact to [4Fe-4S] cluster. Residues serine 241, serine 242, asparagine 243, and serine 290 each contribute to the (2E)-4-hydroxy-3-methylbut-2-enyl diphosphate site. Positions 241, 242, 243, and 290 each coordinate dimethylallyl diphosphate. The isopentenyl diphosphate site is built by serine 241, serine 242, asparagine 243, and serine 290.

It belongs to the IspH family. The cofactor is [4Fe-4S] cluster.

It carries out the reaction isopentenyl diphosphate + 2 oxidized [2Fe-2S]-[ferredoxin] + H2O = (2E)-4-hydroxy-3-methylbut-2-enyl diphosphate + 2 reduced [2Fe-2S]-[ferredoxin] + 2 H(+). The enzyme catalyses dimethylallyl diphosphate + 2 oxidized [2Fe-2S]-[ferredoxin] + H2O = (2E)-4-hydroxy-3-methylbut-2-enyl diphosphate + 2 reduced [2Fe-2S]-[ferredoxin] + 2 H(+). It participates in isoprenoid biosynthesis; dimethylallyl diphosphate biosynthesis; dimethylallyl diphosphate from (2E)-4-hydroxy-3-methylbutenyl diphosphate: step 1/1. Its pathway is isoprenoid biosynthesis; isopentenyl diphosphate biosynthesis via DXP pathway; isopentenyl diphosphate from 1-deoxy-D-xylulose 5-phosphate: step 6/6. Its function is as follows. Catalyzes the conversion of 1-hydroxy-2-methyl-2-(E)-butenyl 4-diphosphate (HMBPP) into a mixture of isopentenyl diphosphate (IPP) and dimethylallyl diphosphate (DMAPP). Acts in the terminal step of the DOXP/MEP pathway for isoprenoid precursor biosynthesis. The sequence is that of 4-hydroxy-3-methylbut-2-enyl diphosphate reductase from Chloroherpeton thalassium (strain ATCC 35110 / GB-78).